The chain runs to 334 residues: 2,3-bisphosphoglycerate-dependent phosphoglycerate mutase 1 (334 aa).

The transit peptide at 1-48 directs the protein to the chloroplast; it reads MATATSHQSVVSFASLRSSPSSTISQCGFKIDSSLSFTSKKTNFCKIK. Substrate contacts are provided by residues 84-91, 97-98, R134, 188-191, K199, 215-216, and 259-260; these read RHGESLWN, TG, ERMY, RR, and GN. Catalysis depends on H85, which acts as the Tele-phosphohistidine intermediate. The active-site Proton donor/acceptor is the E188.

The protein belongs to the phosphoglycerate mutase family. BPG-dependent PGAM subfamily.

The protein localises to the plastid. Its subcellular location is the chloroplast. The enzyme catalyses (2R)-2-phosphoglycerate = (2R)-3-phosphoglycerate. Its pathway is carbohydrate degradation; glycolysis; pyruvate from D-glyceraldehyde 3-phosphate: step 3/5. In terms of biological role, catalyzes the interconversion of 2-phosphoglycerate and 3-phosphoglycerate. In Arabidopsis thaliana (Mouse-ear cress), this protein is 2,3-bisphosphoglycerate-dependent phosphoglycerate mutase 1.